A 337-amino-acid chain; its full sequence is Glycerol-3-phosphate dehydrogenase [NAD(P)+] 2 (337 aa).

Residues threonine 11, tryptophan 12, and lysine 105 each coordinate NADPH. Positions 105, 139, and 141 each coordinate sn-glycerol 3-phosphate. Alanine 143 is an NADPH binding site. The sn-glycerol 3-phosphate site is built by lysine 194, aspartate 247, serine 257, arginine 258, and asparagine 259. The active-site Proton acceptor is lysine 194. Arginine 258 contacts NADPH. NADPH is bound by residues valine 282 and glutamate 284.

It belongs to the NAD-dependent glycerol-3-phosphate dehydrogenase family.

The protein resides in the cytoplasm. It carries out the reaction sn-glycerol 3-phosphate + NAD(+) = dihydroxyacetone phosphate + NADH + H(+). The catalysed reaction is sn-glycerol 3-phosphate + NADP(+) = dihydroxyacetone phosphate + NADPH + H(+). It participates in membrane lipid metabolism; glycerophospholipid metabolism. Its function is as follows. Catalyzes the reduction of the glycolytic intermediate dihydroxyacetone phosphate (DHAP) to sn-glycerol 3-phosphate (G3P), the key precursor for phospholipid synthesis. This Lactobacillus delbrueckii subsp. bulgaricus (strain ATCC 11842 / DSM 20081 / BCRC 10696 / JCM 1002 / NBRC 13953 / NCIMB 11778 / NCTC 12712 / WDCM 00102 / Lb 14) protein is Glycerol-3-phosphate dehydrogenase [NAD(P)+] 2.